Here is a 249-residue protein sequence, read N- to C-terminus: GTP cyclohydrolase 1 type 2 homolog (249 aa).

A divalent metal cation contacts are provided by His-64, His-65, Asp-102, His-217, and Glu-221.

It belongs to the GTP cyclohydrolase I type 2/NIF3 family. As to quaternary structure, homohexamer.

In Neisseria meningitidis serogroup B (strain ATCC BAA-335 / MC58), this protein is GTP cyclohydrolase 1 type 2 homolog.